A 432-amino-acid chain; its full sequence is Tol-Pal system protein TolB (432 aa).

The first 21 residues, 1–21 (MKKVIYTIVGFVFMWSTSVYA), serve as a signal peptide directing secretion.

It belongs to the TolB family. In terms of assembly, the Tol-Pal system is composed of five core proteins: the inner membrane proteins TolA, TolQ and TolR, the periplasmic protein TolB and the outer membrane protein Pal. They form a network linking the inner and outer membranes and the peptidoglycan layer.

The protein localises to the periplasm. Functionally, part of the Tol-Pal system, which plays a role in outer membrane invagination during cell division and is important for maintaining outer membrane integrity. The polypeptide is Tol-Pal system protein TolB (Hydrogenovibrio crunogenus (strain DSM 25203 / XCL-2) (Thiomicrospira crunogena)).